A 270-amino-acid polypeptide reads, in one-letter code: Type III pantothenate kinase (270 aa).

11–18 (DAGNSRIK) serves as a coordination point for ATP. Substrate-binding positions include Y96 and 103–106 (GSDR). Residue D105 is the Proton acceptor of the active site. ATP is bound at residue T129. T195 contributes to the substrate binding site.

The protein belongs to the type III pantothenate kinase family. As to quaternary structure, homodimer. The cofactor is NH4(+). Requires K(+) as cofactor.

Its subcellular location is the cytoplasm. It catalyses the reaction (R)-pantothenate + ATP = (R)-4'-phosphopantothenate + ADP + H(+). Its pathway is cofactor biosynthesis; coenzyme A biosynthesis; CoA from (R)-pantothenate: step 1/5. Its function is as follows. Catalyzes the phosphorylation of pantothenate (Pan), the first step in CoA biosynthesis. In Paraburkholderia xenovorans (strain LB400), this protein is Type III pantothenate kinase.